The chain runs to 547 residues: Cytochrome P450 78A1 (547 aa).

Low complexity predominate over residues 84-94; the sequence is ASSRCPGAAAP. Residues 84–104 are disordered; that stretch reads ASSRCPGAAAPRPRRDGPRRR. Heme is bound at residue Cys490.

Belongs to the cytochrome P450 family. Heme is required as a cofactor. Shoot apex.

This chain is Cytochrome P450 78A1 (CYP78A1), found in Zea mays (Maize).